The following is a 322-amino-acid chain: MSGERAKRFPLALEDLKREPRKPEGRVAERQAAGDAARQRLTAAAAVPAAASPIVPERRAPHGGVFAAKPARAKQHAPAAPGAAKRAPQGGAKQGDRSAAPNVALSGALALTSERVRERMVERLRANGVADPRVLAAMSAVPRHMFVDPGLAAQAYEDAALPIGHQQTISKPSVVARMIELAAAGRALERVLEIGTGCGYQAAVLSRVARDVYSIERVRPLYERAKLNLRPLRVPNIRLHYGDGRVGLPAAAPFDAIVIAAAGLDVPRALLEQLAIGGRLVAPVGEQAGEQVLTLVERVAPAQWRESRLDRVFFVPLKSGVI.

The segment at 1 to 101 is disordered; that stretch reads MSGERAKRFP…AKQGDRSAAP (101 aa). The segment covering 14–29 has biased composition (basic and acidic residues); the sequence is EDLKREPRKPEGRVAE. Low complexity-rich tracts occupy residues 33–51 and 76–91; these read AGDA…PAAA and HAPA…PQGG. The active site involves Ser-170.

The protein belongs to the methyltransferase superfamily. L-isoaspartyl/D-aspartyl protein methyltransferase family.

It is found in the cytoplasm. It carries out the reaction [protein]-L-isoaspartate + S-adenosyl-L-methionine = [protein]-L-isoaspartate alpha-methyl ester + S-adenosyl-L-homocysteine. Its function is as follows. Catalyzes the methyl esterification of L-isoaspartyl residues in peptides and proteins that result from spontaneous decomposition of normal L-aspartyl and L-asparaginyl residues. It plays a role in the repair and/or degradation of damaged proteins. This chain is Protein-L-isoaspartate O-methyltransferase, found in Burkholderia mallei (strain NCTC 10247).